Here is a 263-residue protein sequence, read N- to C-terminus: 4-hydroxy-tetrahydrodipicolinate reductase (263 aa).

NAD(+) contacts are provided by residues 8–13 (GACGKM), aspartate 34, 97–99 (GTT), and 123–126 (APNF). Histidine 153 functions as the Proton donor/acceptor in the catalytic mechanism. Histidine 154 is a (S)-2,3,4,5-tetrahydrodipicolinate binding site. Catalysis depends on lysine 157, which acts as the Proton donor. 163–164 (GT) provides a ligand contact to (S)-2,3,4,5-tetrahydrodipicolinate.

Belongs to the DapB family.

The protein resides in the cytoplasm. The catalysed reaction is (S)-2,3,4,5-tetrahydrodipicolinate + NAD(+) + H2O = (2S,4S)-4-hydroxy-2,3,4,5-tetrahydrodipicolinate + NADH + H(+). It carries out the reaction (S)-2,3,4,5-tetrahydrodipicolinate + NADP(+) + H2O = (2S,4S)-4-hydroxy-2,3,4,5-tetrahydrodipicolinate + NADPH + H(+). The protein operates within amino-acid biosynthesis; L-lysine biosynthesis via DAP pathway; (S)-tetrahydrodipicolinate from L-aspartate: step 4/4. In terms of biological role, catalyzes the conversion of 4-hydroxy-tetrahydrodipicolinate (HTPA) to tetrahydrodipicolinate. This is 4-hydroxy-tetrahydrodipicolinate reductase from Carboxydothermus hydrogenoformans (strain ATCC BAA-161 / DSM 6008 / Z-2901).